The sequence spans 216 residues: Large ribosomal subunit protein uL3 (216 aa).

The segment at 137 to 157 (GASHGAHKNHRKPGSIGGAST) is disordered.

This sequence belongs to the universal ribosomal protein uL3 family. As to quaternary structure, part of the 50S ribosomal subunit. Forms a cluster with proteins L14 and L19.

Functionally, one of the primary rRNA binding proteins, it binds directly near the 3'-end of the 23S rRNA, where it nucleates assembly of the 50S subunit. This chain is Large ribosomal subunit protein uL3, found in Paenarthrobacter aurescens (strain TC1).